The sequence spans 92 residues: Small ribosomal subunit protein uS19 (92 aa).

It belongs to the universal ribosomal protein uS19 family.

Its function is as follows. Protein S19 forms a complex with S13 that binds strongly to the 16S ribosomal RNA. The polypeptide is Small ribosomal subunit protein uS19 (Granulibacter bethesdensis (strain ATCC BAA-1260 / CGDNIH1)).